We begin with the raw amino-acid sequence, 464 residues long: Endo-1,4-beta-xylanase A (464 aa).

The signal sequence occupies residues 1–33 (MFRHHPTRGRRTAGLLAAALATLSAGLTAVAPA). The 310-residue stretch at 40 to 349 (TATLGELAEA…KPAYHAIAAA (310 aa)) folds into the GH10 domain. E166 functions as the Proton donor in the catalytic mechanism. E271 (nucleophile) is an active-site residue. The region spanning 354–457 (SPAPGGNCTA…TPADVTCTPG (104 aa)) is the CBM2 domain.

This sequence belongs to the glycosyl hydrolase 10 (cellulase F) family. Does not require any standard metal (Mg(2+), Mn2(+), Ca(2+)). is required as a cofactor.

It carries out the reaction Endohydrolysis of (1-&gt;4)-beta-D-xylosidic linkages in xylans.. Its pathway is glycan degradation; xylan degradation. With respect to regulation, completely inhibited by Hg(2+), unaffected by EDTA. In terms of biological role, contributes to hydrolysis of hemicellulose, the major component of plant cell-walls. Hydrolyzes xylan to xylose and xylobiose. The sequence is that of Endo-1,4-beta-xylanase A (xynAS9) from Streptomyces sp.